The chain runs to 571 residues: Glutamate--tRNA ligase (571 aa).

The short motif at 110 to 120 (PNPNGPATLGS) is the 'HIGH' region element.

The protein belongs to the class-I aminoacyl-tRNA synthetase family. Glutamate--tRNA ligase type 2 subfamily.

The protein resides in the cytoplasm. It carries out the reaction tRNA(Glu) + L-glutamate + ATP = L-glutamyl-tRNA(Glu) + AMP + diphosphate. Functionally, catalyzes the attachment of glutamate to tRNA(Glu) in a two-step reaction: glutamate is first activated by ATP to form Glu-AMP and then transferred to the acceptor end of tRNA(Glu). This Methanosarcina mazei (strain ATCC BAA-159 / DSM 3647 / Goe1 / Go1 / JCM 11833 / OCM 88) (Methanosarcina frisia) protein is Glutamate--tRNA ligase.